Consider the following 189-residue polypeptide: dCTP deaminase (189 aa).

DCTP is bound by residues 112–117 (KSTYAR), 136–138 (TLE), Gln-157, Tyr-171, and Gln-181. Catalysis depends on Glu-138, which acts as the Proton donor/acceptor.

This sequence belongs to the dCTP deaminase family. As to quaternary structure, homotrimer.

It catalyses the reaction dCTP + H2O + H(+) = dUTP + NH4(+). It participates in pyrimidine metabolism; dUMP biosynthesis; dUMP from dCTP (dUTP route): step 1/2. Its function is as follows. Catalyzes the deamination of dCTP to dUTP. The polypeptide is dCTP deaminase (Acinetobacter baumannii (strain SDF)).